A 156-amino-acid chain; its full sequence is Ribosomal RNA large subunit methyltransferase H (156 aa).

Residues L73, G104, and 123–128 contribute to the S-adenosyl-L-methionine site; that span reads LSALTL.

The protein belongs to the RNA methyltransferase RlmH family. In terms of assembly, homodimer.

Its subcellular location is the cytoplasm. It catalyses the reaction pseudouridine(1915) in 23S rRNA + S-adenosyl-L-methionine = N(3)-methylpseudouridine(1915) in 23S rRNA + S-adenosyl-L-homocysteine + H(+). Its function is as follows. Specifically methylates the pseudouridine at position 1915 (m3Psi1915) in 23S rRNA. In Shewanella sediminis (strain HAW-EB3), this protein is Ribosomal RNA large subunit methyltransferase H.